A 1663-amino-acid chain; its full sequence is TPR repeat-containing protein DDB_G0287407 (1663 aa).

Disordered stretches follow at residues 84-109 (RKTQPTSSNGSTSTTTTTTTTTQKGQ) and 326-359 (SEYSSTNDDGENDQSDDDDDNEDDDDFVEKNSNQ). Low complexity predominate over residues 89-105 (TSSNGSTSTTTTTTTTT). The span at 333–352 (DDGENDQSDDDDDNEDDDDF) shows a compositional bias: acidic residues. TPR repeat units lie at residues 1110-1143 (SDVWFRVASFLEELSQFDGAEVLYNKCRELYINN), 1150-1183 (AKVDRAMGRMYLTMGQNDKSDSKFRLALSIYTKE), 1192-1225 (AITLNLLGTLATNRCKFDEAKQILNQAMNICESK), 1234-1269 (ADIAYSLGSVCFVEPNRKLEVAEAYFARSLELTESK), 1278-1311 (ARILTRLGSLNIEKDTYADAEAFFKAALKIYEAR), and 1320-1353 (SQILRHMISLYEVQENYKMAEQCCIRALAITKKI). 2 disordered regions span residues 1500–1528 (VAQPTSFNSPVQPPSPRTQQAIQQGQQQR) and 1544–1571 (QKVSSLQQQPQQQQQQQPSQGYGNRQNT). Residues 1516–1547 (RTQQAIQQGQQQRQQVQQQQQQVQQQMSQKVS) are a coiled coil. Low complexity-rich tracts occupy residues 1518–1528 (QQAIQQGQQQR) and 1544–1563 (QKVSSLQQQPQQQQQQQPSQ).

The chain is TPR repeat-containing protein DDB_G0287407 from Dictyostelium discoideum (Social amoeba).